Here is a 400-residue protein sequence, read N- to C-terminus: Subtilisin-like protease 1 (400 aa).

The signal sequence occupies residues 1–20 (MKFSQSLIALAACFLPLIAA). A propeptide spanning residues 21–119 (APVEAQHAKI…IEMDGKVQAN (99 aa)) is cleaved from the precursor. One can recognise an Inhibitor I9 domain in the interval 42-117 (SYIVVFNKGV…AWIEMDGKVQ (76 aa)). Asn82 is a glycosylation site (N-linked (GlcNAc...) asparagine). In terms of domain architecture, Peptidase S8 spans 128-400 (TWGLGRISHK…NLIAYNGNGA (273 aa)). Catalysis depends on charge relay system residues Asp160, His192, and Ser345.

It belongs to the peptidase S8 family.

The protein localises to the secreted. Its function is as follows. Major secreted subtilisin-like serine endopeptidase. Mediates the degradation of collagen, the major structural protein in the mammalian host. Degrades the nonhelical regions of collagen that function in the cross-linking of the helical components. May function as virulence factor involved in epidermal wing necrosis observed in white nose syndrome (WNS) in bats. The polypeptide is Subtilisin-like protease 1 (Pseudogymnoascus destructans (strain ATCC MYA-4855 / 20631-21) (Bat white-nose syndrome fungus)).